A 464-amino-acid chain; its full sequence is Putative protein TIC 214 C-terminal part (464 aa).

The protein belongs to the TIC214 family. As to quaternary structure, part of the Tic complex.

The protein localises to the plastid. It is found in the chloroplast. In terms of biological role, involved in protein precursor import into chloroplasts. May be part of an intermediate translocation complex acting as a protein-conducting channel at the inner envelope. The chain is Putative protein TIC 214 C-terminal part from Marchantia polymorpha (Common liverwort).